A 596-amino-acid chain; its full sequence is Elongation factor 4 (596 aa).

The region spanning 2 to 183 (KNIRNFSIIA…AIITRIPAPN (182 aa)) is the tr-type G domain. GTP-binding positions include 14–19 (DHGKST) and 130–133 (NKID).

Belongs to the TRAFAC class translation factor GTPase superfamily. Classic translation factor GTPase family. LepA subfamily.

The protein localises to the cell inner membrane. It carries out the reaction GTP + H2O = GDP + phosphate + H(+). Functionally, required for accurate and efficient protein synthesis under certain stress conditions. May act as a fidelity factor of the translation reaction, by catalyzing a one-codon backward translocation of tRNAs on improperly translocated ribosomes. Back-translocation proceeds from a post-translocation (POST) complex to a pre-translocation (PRE) complex, thus giving elongation factor G a second chance to translocate the tRNAs correctly. Binds to ribosomes in a GTP-dependent manner. In Campylobacter concisus (strain 13826), this protein is Elongation factor 4.